Reading from the N-terminus, the 122-residue chain is Large ribosomal subunit protein uL14 (122 aa).

The protein belongs to the universal ribosomal protein uL14 family. In terms of assembly, part of the 50S ribosomal subunit. Forms a cluster with proteins L3 and L19. In the 70S ribosome, L14 and L19 interact and together make contacts with the 16S rRNA in bridges B5 and B8. Can interact with ribosomal silencing factor RsfS, which may inhibit ribosomal subunit association.

In terms of biological role, binds to 23S rRNA. Forms part of two intersubunit bridges in the 70S ribosome. The polypeptide is Large ribosomal subunit protein uL14 (Synechocystis sp. (strain ATCC 27184 / PCC 6803 / Kazusa)).